Reading from the N-terminus, the 107-residue chain is uncharacterized protein (107 aa).

This is an uncharacterized protein from Homo sapiens (Human).